A 284-amino-acid polypeptide reads, in one-letter code: D-tagatose-1,6-bisphosphate aldolase subunit GatY (284 aa).

D82 acts as the Proton donor in catalysis. Residues H83 and H180 each coordinate Zn(2+). Position 181 (G181) interacts with dihydroxyacetone phosphate. Zn(2+) is bound at residue H208. Residues 209 to 211 and 230 to 233 contribute to the dihydroxyacetone phosphate site; these read GAS and NVAT.

The protein belongs to the class II fructose-bisphosphate aldolase family. TagBP aldolase GatY subfamily. In terms of assembly, forms a complex with GatZ. It depends on Zn(2+) as a cofactor.

It catalyses the reaction D-tagatofuranose 1,6-bisphosphate = D-glyceraldehyde 3-phosphate + dihydroxyacetone phosphate. The protein operates within carbohydrate metabolism; D-tagatose 6-phosphate degradation; D-glyceraldehyde 3-phosphate and glycerone phosphate from D-tagatose 6-phosphate: step 2/2. Its function is as follows. Catalytic subunit of the tagatose-1,6-bisphosphate aldolase GatYZ, which catalyzes the reversible aldol condensation of dihydroxyacetone phosphate (DHAP or glycerone-phosphate) with glyceraldehyde 3-phosphate (G3P) to produce tagatose 1,6-bisphosphate (TBP). Requires GatZ subunit for full activity and stability. Is involved in the catabolism of galactitol. The chain is D-tagatose-1,6-bisphosphate aldolase subunit GatY from Klebsiella pneumoniae subsp. pneumoniae (strain ATCC 700721 / MGH 78578).